The primary structure comprises 340 residues: Phosphate acyltransferase (340 aa).

The protein belongs to the PlsX family. In terms of assembly, homodimer. Probably interacts with PlsY.

It localises to the cytoplasm. The enzyme catalyses a fatty acyl-[ACP] + phosphate = an acyl phosphate + holo-[ACP]. Its pathway is lipid metabolism; phospholipid metabolism. Functionally, catalyzes the reversible formation of acyl-phosphate (acyl-PO(4)) from acyl-[acyl-carrier-protein] (acyl-ACP). This enzyme utilizes acyl-ACP as fatty acyl donor, but not acyl-CoA. The protein is Phosphate acyltransferase of Nitrosococcus oceani (strain ATCC 19707 / BCRC 17464 / JCM 30415 / NCIMB 11848 / C-107).